The primary structure comprises 1687 residues: Brefeldin A-inhibited guanine nucleotide-exchange protein 1 (1687 aa).

The tract at residues 494 to 529 (SLENEAPANNHSNSNEEDGTTIDHDFHPDLNPESSD) is disordered. A compositionally biased stretch (basic and acidic residues) spans 514 to 523 (TIDHDFHPDL). In terms of domain architecture, SEC7 spans 532-719 (TLEQRRAYKI…GALYDQVVIN (188 aa)). Residue glutamate 634 is part of the active site. Positions 1229 to 1248 (KGRSSSPSTPVTDDHSPSTQ) are disordered. Polar residues predominate over residues 1232–1248 (SSSPSTPVTDDHSPSTQ).

Homodimer.

It is found in the cytoplasm. Its subcellular location is the cytosol. It localises to the membrane. Its activity is regulated as follows. Inhibited by brefeldin A. Activates the ARF proteins by exchanging bound GDP for free GTP. Plays a role in vesicular protein sorting. The polypeptide is Brefeldin A-inhibited guanine nucleotide-exchange protein 1 (BIG1) (Arabidopsis thaliana (Mouse-ear cress)).